The primary structure comprises 944 residues: UvrABC system protein A (944 aa).

Position 33–40 (Gly-33–Ser-40) interacts with ATP. Residues Cys-252–Cys-279 form a C4-type zinc finger. ABC transporter domains are found at residues Trp-309–Leu-587 and Ile-607–Lys-935. Gly-639–Ser-646 is a binding site for ATP. The C4-type zinc-finger motif lies at Cys-738–Cys-764.

This sequence belongs to the ABC transporter superfamily. UvrA family. Forms a heterotetramer with UvrB during the search for lesions.

The protein resides in the cytoplasm. Functionally, the UvrABC repair system catalyzes the recognition and processing of DNA lesions. UvrA is an ATPase and a DNA-binding protein. A damage recognition complex composed of 2 UvrA and 2 UvrB subunits scans DNA for abnormalities. When the presence of a lesion has been verified by UvrB, the UvrA molecules dissociate. This is UvrABC system protein A from Staphylococcus epidermidis (strain ATCC 35984 / DSM 28319 / BCRC 17069 / CCUG 31568 / BM 3577 / RP62A).